The chain runs to 297 residues: Large ribosomal subunit protein uL15m (297 aa).

The transit peptide at 1–21 directs the protein to the mitochondrion; sequence MSGNGVHGVHGALQLLRSLPK. The interval 23-69 is disordered; it reads SLANLRPNPGSKKPERRRGRGRYRGRKCGRGHKGERQRGNRPRLGFE. Positions 36–53 are enriched in basic residues; that stretch reads PERRRGRGRYRGRKCGRG.

This sequence belongs to the universal ribosomal protein uL15 family. As to quaternary structure, component of the mitochondrial ribosome large subunit (39S) which comprises a 16S rRNA and about 50 distinct proteins.

It is found in the mitochondrion. This Gallus gallus (Chicken) protein is Large ribosomal subunit protein uL15m (MRPL15).